Reading from the N-terminus, the 126-residue chain is Small ribosomal subunit protein uS13 (126 aa).

Residues 95-126 (GLPVRGQRTHTNARTRKGPRKTVAGKKKPGKK) form a disordered region.

Belongs to the universal ribosomal protein uS13 family. Part of the 30S ribosomal subunit. Forms a loose heterodimer with protein S19. Forms two bridges to the 50S subunit in the 70S ribosome.

Its function is as follows. Located at the top of the head of the 30S subunit, it contacts several helices of the 16S rRNA. In the 70S ribosome it contacts the 23S rRNA (bridge B1a) and protein L5 of the 50S subunit (bridge B1b), connecting the 2 subunits; these bridges are implicated in subunit movement. Contacts the tRNAs in the A and P-sites. This Acidothermus cellulolyticus (strain ATCC 43068 / DSM 8971 / 11B) protein is Small ribosomal subunit protein uS13.